Consider the following 842-residue polypeptide: Protein P (842 aa).

Residues 1 to 177 (MPLSYQHFRR…FCGSPYSWEQ (177 aa)) form a terminal protein domain (TP) region. Positions 178 to 345 (ELHHGAFLDG…YCLTHLVNLL (168 aa)) are spacer. Residues 186–273 (DGPSRMGEES…AKNIASRSAS (88 aa)) form a disordered region. A compositionally biased stretch (polar residues) spans 223–239 (GPQSQQRPLDGSQQGRS). The interval 346–689 (EDWGPCTEHG…YLNLYPVARQ (344 aa)) is polymerase/reverse transcriptase domain (RT). The Reverse transcriptase domain occupies 356–599 (KHHIRIPRTP…YSLNFMGYVI (244 aa)). Residues D428, D550, and D551 each contribute to the Mg(2+) site.

The protein belongs to the hepadnaviridae P protein family.

It carries out the reaction DNA(n) + a 2'-deoxyribonucleoside 5'-triphosphate = DNA(n+1) + diphosphate. The enzyme catalyses Endonucleolytic cleavage to 5'-phosphomonoester.. Its activity is regulated as follows. Activated by host HSP70 and HSP40 in vitro to be able to bind the epsilon loop of the pgRNA. Because deletion of the RNase H region renders the protein partly chaperone-independent, the chaperones may be needed indirectly to relieve occlusion of the RNA-binding site by this domain. Inhibited by several reverse-transcriptase inhibitors: Lamivudine, Adefovir and Entecavir. In terms of biological role, multifunctional enzyme that converts the viral RNA genome into dsDNA in viral cytoplasmic capsids. This enzyme displays a DNA polymerase activity that can copy either DNA or RNA templates, and a ribonuclease H (RNase H) activity that cleaves the RNA strand of RNA-DNA heteroduplexes in a partially processive 3'- to 5'-endonucleasic mode. Neo-synthesized pregenomic RNA (pgRNA) are encapsidated together with the P protein, and reverse-transcribed inside the nucleocapsid. Initiation of reverse-transcription occurs first by binding the epsilon loop on the pgRNA genome, and is initiated by protein priming, thereby the 5'-end of (-)DNA is covalently linked to P protein. Partial (+)DNA is synthesized from the (-)DNA template and generates the relaxed circular DNA (RC-DNA) genome. After budding and infection, the RC-DNA migrates in the nucleus, and is converted into a plasmid-like covalently closed circular DNA (cccDNA). The activity of P protein does not seem to be necessary for cccDNA generation, and is presumably released from (+)DNA by host nuclear DNA repair machinery. This is Protein P from Homo sapiens (Human).